The sequence spans 132 residues: Outer membrane protein RomA (132 aa).

This sequence to M.tuberculosis Rv0906.

Its subcellular location is the cell outer membrane. This chain is Outer membrane protein RomA (romA), found in Klebsiella pneumoniae.